The sequence spans 472 residues: MAKSLFQKVWDAHTVRKLANGQTQLLIGTHLIHEVTSPQAFGMLRDLGLKVAFPQRTFATVDHIVPTDQVVEPYRDPLAQAMMDELRKNCAEFGITFFDRSTGKQGIVHIVGPEQGITQPGTTIACGDSHTSTHGAFGAIAFGIGTSQVRDVLATQTMALGPLKVRRIEVNGKLRPGVYAKDVILHIIRTLGVNGGTGFAYEYAGEVFDRFSMEERMTVCNMSIEGGARVGYVNPDDTTFTYLKGRPYAPKGAAWDEAVTRWRAVASDSGCRYDDVVKINAADIAPTVTWGINPGQGISINEQIPDPAKATDADEKANIEEALAYMKLQPGAPIKGTKINVAFLGSCTNGRLSDFQEVAKFVKGKRVAAGVKAIAVPGSQIVALQCEKLGLDKILSEAGFEWRAAGCSMCLAMNPDKLIGDQLCASSSNRNFKGRQGSPTGRTILMSPLMVAAAAVTGQVADAREVFGVSAN.

The [4Fe-4S] cluster site is built by C347, C407, and C410.

It belongs to the aconitase/IPM isomerase family. LeuC type 1 subfamily. As to quaternary structure, heterodimer of LeuC and LeuD. Requires [4Fe-4S] cluster as cofactor.

It carries out the reaction (2R,3S)-3-isopropylmalate = (2S)-2-isopropylmalate. It functions in the pathway amino-acid biosynthesis; L-leucine biosynthesis; L-leucine from 3-methyl-2-oxobutanoate: step 2/4. Catalyzes the isomerization between 2-isopropylmalate and 3-isopropylmalate, via the formation of 2-isopropylmaleate. The sequence is that of 3-isopropylmalate dehydratase large subunit from Opitutus terrae (strain DSM 11246 / JCM 15787 / PB90-1).